The primary structure comprises 626 residues: Dual specificity testis-specific protein kinase 1 (626 aa).

A disordered region spans residues 1 to 41 (MAGERPPLRGPGPGPGEVPGEGPPGPGGTGGGPGRGRPSSY). The segment covering 8–26 (LRGPGPGPGEVPGEGPPGP) has biased composition (pro residues). Residues 57 to 314 (FHCAEKIGAG…TEITQHLEWI (258 aa)) form the Protein kinase domain. ATP contacts are provided by residues 63 to 71 (IGAGFFSEV) and Lys-86. Asp-175 acts as the Proton acceptor in catalysis. The residue at position 220 (Ser-220) is a Phosphoserine; by autocatalysis. Disordered regions lie at residues 331–373 (HNQG…NWGD), 423–488 (ETLV…QLPL), and 529–564 (WAGEPWNRAQHSLPRAAALERTEPSPPPSAPREPDE). Position 338 is an omega-N-methylarginine (Arg-338). A compositionally biased stretch (basic and acidic residues) spans 348 to 357 (PDPRLSRSRS). The interval 419–524 (VTTPETLVQP…NNNPPAVVVN (106 aa)) is required for interaction with YWHAB. The segment covering 476–485 (EPEPPGPAPQ) has biased composition (pro residues). A required for interaction with PARVA region spans residues 527 to 624 (QGWAGEPWNR…PTPSLQLPGA (98 aa)). Residues 527 to 626 (QGWAGEPWNR…PSLQLPGARS (100 aa)) are required for interaction with SPRED1 and SPRY2. Required for TESK1-mediated dephosphorylation of SPRY2 and SPRY2 inhibition of ERK phosphorylation.

The protein belongs to the protein kinase superfamily. TKL Ser/Thr protein kinase family. In terms of assembly, interacts (via both C- and N-termini) with SPRY4 (via C-terminus); the interaction inhibits TESK1 kinase activity. Interacts with TAOK1; the interaction inhibits TAOK1 kinase activity. Interacts (via C-terminus) with SPRED1 (via C-terminus); the interaction inhibits TESK1 kinase activity. Interacts (via C-terminus) with PARVA/PARVIN (via C-terminus); the interaction inhibits TESK1 kinase activity. Interacts with YWHAB/14-3-3 beta; the interaction is dependent on the phosphorylation of TESK1 Ser-437 and inhibits TESK1 kinase activity. Interacts with SPRY1, SPRY3 and SPRED2. Interacts (via C-terminus) with SPRY2 (via C-terminus); the interaction disrupts SPRY2 interaction with PPP2CA/PP2A-C, possibly by vesicular sequestration of SPRY2. Therefore dephosphorylation of SPRY2 by the serine/threonine-protein phosphatase 2A (PP2A) holoenzyme is lost, inhibiting its interaction with GRB2. The cofactor is Mg(2+). Mn(2+) serves as cofactor. Post-translationally, autophosphorylated on serine and tyrosine residues. In terms of tissue distribution, expressed in podocytes and renal tubular cells in the kidney (at protein level).

It localises to the cytoplasm. Its subcellular location is the perinuclear region. The protein resides in the cytoskeleton. It is found in the microtubule organizing center. The protein localises to the centrosome. It localises to the cell projection. Its subcellular location is the lamellipodium. The catalysed reaction is L-seryl-[protein] + ATP = O-phospho-L-seryl-[protein] + ADP + H(+). The enzyme catalyses L-threonyl-[protein] + ATP = O-phospho-L-threonyl-[protein] + ADP + H(+). It carries out the reaction L-tyrosyl-[protein] + ATP = O-phospho-L-tyrosyl-[protein] + ADP + H(+). With respect to regulation, activated by autophosphorylation on Ser-220. Kinase activity is inhibited by SPRED1. Dual specificity protein kinase activity catalyzing autophosphorylation and phosphorylation of exogenous substrates on both serine/threonine and tyrosine residues. Regulates the cellular cytoskeleton by enhancing actin stress fiber formation via phosphorylation of cofilin and by preventing microtubule breakdown via inhibition of TAOK1/MARKK kinase activity. Inhibits podocyte motility via regulation of actin cytoskeletal dynamics and phosphorylation of CFL1. Positively regulates integrin-mediated cell spreading, via phosphorylation of cofilin. Suppresses ciliogenesis via multiple pathways; phosphorylation of CFL1, suppression of ciliary vesicle directional trafficking to the ciliary base, and by facilitating YAP1 nuclear localization where it acts as a transcriptional corepressor of the TEAD4 target genes AURKA and PLK1. Probably plays a central role at and after the meiotic phase of spermatogenesis. In Homo sapiens (Human), this protein is Dual specificity testis-specific protein kinase 1 (TESK1).